A 184-amino-acid polypeptide reads, in one-letter code: ATP-dependent protease subunit HslV (184 aa).

Thr12 is a catalytic residue. Na(+) contacts are provided by Ala166, Cys169, and Thr172.

This sequence belongs to the peptidase T1B family. HslV subfamily. As to quaternary structure, a double ring-shaped homohexamer of HslV is capped on each side by a ring-shaped HslU homohexamer. The assembly of the HslU/HslV complex is dependent on binding of ATP.

It is found in the cytoplasm. The enzyme catalyses ATP-dependent cleavage of peptide bonds with broad specificity.. Its activity is regulated as follows. Allosterically activated by HslU binding. Functionally, protease subunit of a proteasome-like degradation complex believed to be a general protein degrading machinery. This chain is ATP-dependent protease subunit HslV, found in Nitrobacter winogradskyi (strain ATCC 25391 / DSM 10237 / CIP 104748 / NCIMB 11846 / Nb-255).